Here is a 180-residue protein sequence, read N- to C-terminus: ATP synthase subunit delta (180 aa).

The protein belongs to the ATPase delta chain family. As to quaternary structure, F-type ATPases have 2 components, F(1) - the catalytic core - and F(0) - the membrane proton channel. F(1) has five subunits: alpha(3), beta(3), gamma(1), delta(1), epsilon(1). F(0) has three main subunits: a(1), b(2) and c(10-14). The alpha and beta chains form an alternating ring which encloses part of the gamma chain. F(1) is attached to F(0) by a central stalk formed by the gamma and epsilon chains, while a peripheral stalk is formed by the delta and b chains.

It localises to the cell inner membrane. Functionally, f(1)F(0) ATP synthase produces ATP from ADP in the presence of a proton or sodium gradient. F-type ATPases consist of two structural domains, F(1) containing the extramembraneous catalytic core and F(0) containing the membrane proton channel, linked together by a central stalk and a peripheral stalk. During catalysis, ATP synthesis in the catalytic domain of F(1) is coupled via a rotary mechanism of the central stalk subunits to proton translocation. Its function is as follows. This protein is part of the stalk that links CF(0) to CF(1). It either transmits conformational changes from CF(0) to CF(1) or is implicated in proton conduction. This chain is ATP synthase subunit delta, found in Cupriavidus metallidurans (strain ATCC 43123 / DSM 2839 / NBRC 102507 / CH34) (Ralstonia metallidurans).